The primary structure comprises 335 residues: MTLPPPAAYADSLRLSVAPMMDWTDRHCRVFHRLLAPSARLYTEMVHANAVIHGDRQRLIGFDAVEHPLALQLGGSDPALLAQAAQIAQAWGYDEINLNCGCPSDRVQAGRFGACLMREPALVADCVAAMCAATALPVTVKCRLGVDDDDDYAVFAGFIDQVVGAGAAMVVVHARNAWLKGLSPKENREVPPLRYDWAYRLKQERPALPVVLNGGIASVEASLAHLQHTDGVMLGRAAYHDPYVLHQLEAALSGRPERARADLLQAYQPYVQAQLDQGLALKHMTRHILGLFHGQPGGRVFRQVLSEGAHRPGAGWELVEQASQRTDDQARRIAA.

FMN is bound by residues 19-21 (PMM) and Gln-72. Cys-102 functions as the Proton donor in the catalytic mechanism. FMN is bound by residues Lys-141, His-173, 213–215 (NGG), and 235–236 (GR).

Belongs to the Dus family. DusA subfamily. Requires FMN as cofactor.

The catalysed reaction is 5,6-dihydrouridine(20) in tRNA + NADP(+) = uridine(20) in tRNA + NADPH + H(+). It catalyses the reaction 5,6-dihydrouridine(20) in tRNA + NAD(+) = uridine(20) in tRNA + NADH + H(+). It carries out the reaction 5,6-dihydrouridine(20a) in tRNA + NADP(+) = uridine(20a) in tRNA + NADPH + H(+). The enzyme catalyses 5,6-dihydrouridine(20a) in tRNA + NAD(+) = uridine(20a) in tRNA + NADH + H(+). Functionally, catalyzes the synthesis of 5,6-dihydrouridine (D), a modified base found in the D-loop of most tRNAs, via the reduction of the C5-C6 double bond in target uridines. Specifically modifies U20 and U20a in tRNAs. The chain is tRNA-dihydrouridine(20/20a) synthase from Xanthomonas campestris pv. campestris (strain ATCC 33913 / DSM 3586 / NCPPB 528 / LMG 568 / P 25).